The sequence spans 225 residues: Rho GDP-dissociation inhibitor 3 (225 aa).

The protein belongs to the Rho GDI family.

It localises to the cytoplasm. Functionally, inhibits GDP/GTP exchange reaction of RhoB. Interacts specifically with the GDP- and GTP-bound forms of post-translationally processed Rhob and Rhog proteins, both of which show a growth-regulated expression in mammalian cells. Stimulates the release of the GDP-bound but not the GTP-bound RhoB protein. Also inhibits the GDP/GTP exchange of RhoB but shows less ability to inhibit the dissociation of prebound GTP. This chain is Rho GDP-dissociation inhibitor 3 (ARHGDIG), found in Bos taurus (Bovine).